The following is a 508-amino-acid chain: Cytochrome P450 monooxygenase pkfB (508 aa).

The chain crosses the membrane as a helical span at residues 9 to 29 (FSLGLSQILVCLALLYAAIHI). N-linked (GlcNAc...) asparagine glycans are attached at residues Asn57 and Asn305. Residue Cys450 participates in heme binding.

This sequence belongs to the cytochrome P450 family. Heme serves as cofactor.

It localises to the membrane. The protein operates within secondary metabolite biosynthesis. Cytochrome P450 monooxygenase; part of the gene cluster that mediates the biosynthesis of aspernidine A, a prenylated isoindolinone. The starting point of the biosynthesis of aspernidin A is the production of orsellinaldehyde by the non-reducing polyketide synthase pkfA. Hydroxylation, methylation of one of the phenol groups, and prenylation, presumably catalyzed by the prenyltransferase pkfE, would be needed to yield aspernidine D. Subsequently, the cytochrome P450 monooxygenase pkfB is responsible for hydroxylation of aspernidine D to yield aspernidine E. The dehydrogenase pkfF may be responsible for further oxidation of aspernidine E to form a dialdehyde intermediate which is further transformed in a series of steps, some of which are enzyme-mediated, to generate aspernidine A. The possibility that additional enzymes outside of the cluster are involved in aspernidine A biosynthesis cannot be excluded. This Emericella nidulans (strain FGSC A4 / ATCC 38163 / CBS 112.46 / NRRL 194 / M139) (Aspergillus nidulans) protein is Cytochrome P450 monooxygenase pkfB.